Consider the following 416-residue polypeptide: CinA-like protein (416 aa).

Belongs to the CinA family.

The sequence is that of CinA-like protein from Trichormus variabilis (strain ATCC 29413 / PCC 7937) (Anabaena variabilis).